Consider the following 174-residue polypeptide: Large ribosomal subunit protein uL10 (174 aa).

This sequence belongs to the universal ribosomal protein uL10 family. As to quaternary structure, part of the ribosomal stalk of the 50S ribosomal subunit. The N-terminus interacts with L11 and the large rRNA to form the base of the stalk. The C-terminus forms an elongated spine to which L12 dimers bind in a sequential fashion forming a multimeric L10(L12)X complex.

In terms of biological role, forms part of the ribosomal stalk, playing a central role in the interaction of the ribosome with GTP-bound translation factors. The protein is Large ribosomal subunit protein uL10 of Geobacter sulfurreducens (strain ATCC 51573 / DSM 12127 / PCA).